A 79-amino-acid polypeptide reads, in one-letter code: Short neurotoxin 4 (79 aa).

Positions 1–21 (MKTLLLTLVMVTIMCLDLGYT) are cleaved as a signal peptide. 3 cysteine pairs are disulfide-bonded: Cys-24-Cys-41, Cys-34-Cys-59, and Cys-63-Cys-71.

Belongs to the three-finger toxin family. Short-chain subfamily. Type III alpha-neurotoxin sub-subfamily. As to expression, expressed by the venom gland.

The protein localises to the secreted. In terms of biological role, binds with high affinity to muscle nicotinic acetylcholine receptor (nAChR) and hinders acetylcholine binding to the receptor, thereby impairing neuromuscular transmission. Causes muscle paralysis, spasms and increased respiration. The protein is Short neurotoxin 4 of Pseudonaja textilis (Eastern brown snake).